Consider the following 592-residue polypeptide: Protein kinase C zeta type (592 aa).

A PB1 domain is found at 15–98; sequence RVRLKAHYGG…EVLIIHVFPS (84 aa). The interval 79-145 is interaction with SQSTM1; that stretch reads AFRLVCQGRD…KRFNRGAYCG (67 aa). The segment at 130 to 180 adopts a Phorbol-ester/DAG-type zinc-finger fold; sequence GHLFQAKRFNRGAYCGQCSERIWGLSRQGYRCINCKLLVHKRCHVLVPLTC. In terms of domain architecture, Protein kinase spans 252-518; that stretch reads FDLIRVIGRG…FSDIKSHAFF (267 aa). ATP-binding positions include 258–266 and Lys-281; that span reads IGRGSYAKV. Catalysis depends on Asp-376, which acts as the Proton acceptor. At Thr-410 the chain carries Phosphothreonine; by PDPK1 and PI3K. An AGC-kinase C-terminal domain is found at 519 to 590; the sequence is RSIDWDLLEK…INPLLLSAEE (72 aa). Thr-560 is modified (phosphothreonine). Ser-591 is subject to Phosphoserine.

This sequence belongs to the protein kinase superfamily. AGC Ser/Thr protein kinase family. PKC subfamily. In terms of assembly, interacts directly with SQSTM1. Forms a ternary complex with SQSTM1 and KCNAB2. Forms another ternary complex with SQSTM1 and GABRR3. Forms a complex with SQSTM1 and MAP2K5. Interacts with PARD6A, PARD6B and PARD6G. Part of a complex with PARD3, PARD6A or PARD6B or PARD6G and CDC42 or RAC1. Interacts with ADAP1/CENTA1. Interacts (via the protein kinase domain) with WWC1. Forms a tripartite complex with WWC1 and DDR1, but predominantly in the absence of collagen. Interacts with PDPK1 (via N-terminal region). Interacts with WDFY2 (via WD repeats 1-3). Interacts with VAMP2. Forms a complex with WDFY2 and VAMP2. Interacts with APPL1. Interacts with WWC1, WWC2 and WWC3. Post-translationally, CDH5 is required for its phosphorylation at Thr-410. Phosphorylated by protein kinase PDPK1; phosphorylation is inhibited by the apoptotic C-terminal cleavage product of PKN2. Phosphorylation at Thr-410 by PI3K activates the kinase. Isoform 1: In brain, highly expressed in cerebellar granule neurons and cerebellar astrocytes (at protein level). Expressed at low levels in testes, lung and kidney. Isoform 2: Specifically expressed in brain where it localizes to cerebellar granule neurons (at protein level).

Its subcellular location is the cytoplasm. The protein localises to the endosome. It is found in the cell junction. It localises to the membrane. It catalyses the reaction L-seryl-[protein] + ATP = O-phospho-L-seryl-[protein] + ADP + H(+). It carries out the reaction L-threonyl-[protein] + ATP = O-phospho-L-threonyl-[protein] + ADP + H(+). Its activity is regulated as follows. Atypical PKCs (PRKCI and PRKCZ) exhibit an elevated basal enzymatic activity (that may be due to the interaction with SMG1 or SQSTM1) and are not regulated by diacylglycerol, phosphatidylserine, phorbol esters or calcium ions. Two specific sites, Thr-410 (activation loop of the kinase domain) and Thr-560 (turn motif), need to be phosphorylated for its full activation. Phosphatidylinositol 3,4,5-trisphosphate might be a physiological activator. Isoform 2: Constitutively active. In terms of biological role, calcium- and diacylglycerol-independent serine/threonine-protein kinase that functions in phosphatidylinositol 3-kinase (PI3K) pathway and mitogen-activated protein (MAP) kinase cascade, and is involved in NF-kappa-B activation, mitogenic signaling, cell proliferation, cell polarity, inflammatory response and maintenance of long-term potentiation (LTP). Upon lipopolysaccharide (LPS) treatment in macrophages, or following mitogenic stimuli, functions downstream of PI3K to activate MAP2K1/MEK1-MAPK1/ERK2 signaling cascade independently of RAF1 activation. Required for insulin-dependent activation of AKT3, but may function as an adapter rather than a direct activator. Upon insulin treatment may act as a downstream effector of PI3K and contribute to the activation of translocation of the glucose transporter SLC2A4/GLUT4 and subsequent glucose transport in adipocytes. In EGF-induced cells, binds and activates MAP2K5/MEK5-MAPK7/ERK5 independently of its kinase activity and can activate JUN promoter through MEF2C. Through binding with SQSTM1/p62, functions in interleukin-1 signaling and activation of NF-kappa-B with the specific adapters RIPK1 and TRAF6. Participates in TNF-dependent transactivation of NF-kappa-B by phosphorylating and activating IKBKB kinase, which in turn leads to the degradation of NF-kappa-B inhibitors. In migrating astrocytes, forms a cytoplasmic complex with PARD6A and is recruited by CDC42 to function in the establishment of cell polarity along with the microtubule motor and dynein. In association with FEZ1, stimulates neuronal differentiation in PC12 cells. In the inflammatory response, is required for the T-helper 2 (Th2) differentiation process, including interleukin production, efficient activation of JAK1 and the subsequent phosphorylation and nuclear translocation of STAT6. May be involved in development of allergic airway inflammation (asthma), a process dependent on Th2 immune response. In the NF-kappa-B-mediated inflammatory response, can relieve SETD6-dependent repression of NF-kappa-B target genes by phosphorylating the RELA subunit at 'Ser-311'. Phosphorylates VAMP2 in vitro. Phosphorylates and activates LRRK1, which phosphorylates RAB proteins involved in intracellular trafficking. Its function is as follows. Involved in late synaptic long term potentiation phase in CA1 hippocampal cells and long term memory maintenance. In Mus musculus (Mouse), this protein is Protein kinase C zeta type (Prkcz).